Reading from the N-terminus, the 220-residue chain is Guanylate kinase (220 aa).

The 180-residue stretch at 16–195 (GLMFVLSSPS…AFESVKAILR (180 aa)) folds into the Guanylate kinase-like domain. 23-30 (SPSGAGKT) contributes to the ATP binding site.

Belongs to the guanylate kinase family.

The protein localises to the cytoplasm. It carries out the reaction GMP + ATP = GDP + ADP. Functionally, essential for recycling GMP and indirectly, cGMP. The sequence is that of Guanylate kinase from Rhodopseudomonas palustris (strain HaA2).